A 159-amino-acid polypeptide reads, in one-letter code: 2-C-methyl-D-erythritol 2,4-cyclodiphosphate synthase (159 aa).

Residues aspartate 10 and histidine 12 each contribute to the a divalent metal cation site. Residues 10 to 12 and 36 to 37 each bind 4-CDP-2-C-methyl-D-erythritol 2-phosphate; these read DVH and HS. A divalent metal cation is bound at residue histidine 44. Residues 58–60, 63–67, 102–108, 134–137, phenylalanine 141, and arginine 144 each bind 4-CDP-2-C-methyl-D-erythritol 2-phosphate; these read DIG, FPDTD, AQAPKMA, and TTTE.

This sequence belongs to the IspF family. Homotrimer. The cofactor is a divalent metal cation.

The enzyme catalyses 4-CDP-2-C-methyl-D-erythritol 2-phosphate = 2-C-methyl-D-erythritol 2,4-cyclic diphosphate + CMP. The protein operates within isoprenoid biosynthesis; isopentenyl diphosphate biosynthesis via DXP pathway; isopentenyl diphosphate from 1-deoxy-D-xylulose 5-phosphate: step 4/6. Involved in the biosynthesis of isopentenyl diphosphate (IPP) and dimethylallyl diphosphate (DMAPP), two major building blocks of isoprenoid compounds. Catalyzes the conversion of 4-diphosphocytidyl-2-C-methyl-D-erythritol 2-phosphate (CDP-ME2P) to 2-C-methyl-D-erythritol 2,4-cyclodiphosphate (ME-CPP) with a corresponding release of cytidine 5-monophosphate (CMP). This chain is 2-C-methyl-D-erythritol 2,4-cyclodiphosphate synthase, found in Idiomarina loihiensis (strain ATCC BAA-735 / DSM 15497 / L2-TR).